Reading from the N-terminus, the 171-residue chain is CDP-archaeol synthase (171 aa).

The next 5 helical transmembrane spans lie at 7-27, 55-75, 84-104, 115-135, and 141-161; these read MFWALWYILPAYFANASPVLL, FLGGVSVGTLVGVLQYYLTPA, VLLAFLLSFGALMGDLVGSFI, PAVGLDQLGFLISALAFAYPV, and GQMLFLLIFTPLVHWGANYFA.

It belongs to the CDP-archaeol synthase family. The cofactor is Mg(2+).

It is found in the cell membrane. The catalysed reaction is 2,3-bis-O-(geranylgeranyl)-sn-glycerol 1-phosphate + CTP + H(+) = CDP-2,3-bis-O-(geranylgeranyl)-sn-glycerol + diphosphate. It participates in membrane lipid metabolism; glycerophospholipid metabolism. Functionally, catalyzes the formation of CDP-2,3-bis-(O-geranylgeranyl)-sn-glycerol (CDP-archaeol) from 2,3-bis-(O-geranylgeranyl)-sn-glycerol 1-phosphate (DGGGP) and CTP. This reaction is the third ether-bond-formation step in the biosynthesis of archaeal membrane lipids. This is CDP-archaeol synthase from Thermococcus gammatolerans (strain DSM 15229 / JCM 11827 / EJ3).